A 291-amino-acid chain; its full sequence is Glycine--tRNA ligase alpha subunit (291 aa).

The protein belongs to the class-II aminoacyl-tRNA synthetase family. In terms of assembly, tetramer of two alpha and two beta subunits.

The protein resides in the cytoplasm. The enzyme catalyses tRNA(Gly) + glycine + ATP = glycyl-tRNA(Gly) + AMP + diphosphate. This is Glycine--tRNA ligase alpha subunit from Trichlorobacter lovleyi (strain ATCC BAA-1151 / DSM 17278 / SZ) (Geobacter lovleyi).